The primary structure comprises 555 residues: Glutamine--tRNA ligase (555 aa).

The short motif at 34 to 44 is the 'HIGH' region element; that stretch reads PEPNGYLHIGH. Residues 35–37 and 41–47 contribute to the ATP site; these read EPN and HIGHAKS. L-glutamine-binding residues include Asp67 and Tyr212. ATP-binding positions include Thr231, 261 to 262, and 269 to 271; these read RL and MSK. Positions 268–272 match the 'KMSKS' region motif; that stretch reads IMSKR.

Belongs to the class-I aminoacyl-tRNA synthetase family. In terms of assembly, monomer.

The protein resides in the cytoplasm. It catalyses the reaction tRNA(Gln) + L-glutamine + ATP = L-glutaminyl-tRNA(Gln) + AMP + diphosphate. The sequence is that of Glutamine--tRNA ligase from Erwinia tasmaniensis (strain DSM 17950 / CFBP 7177 / CIP 109463 / NCPPB 4357 / Et1/99).